The sequence spans 125 residues: uncharacterized protein (125 aa).

It is found in the plastid. The protein resides in the chloroplast. This is an uncharacterized protein from Guillardia theta (Cryptophyte).